The primary structure comprises 425 residues: MATASFDSAPGASRALPAIEKAPEVTALSTLPGRKASLVGLTREGLKQALIGIGVPERETRMRVSQIWHWLYVRGAREFSEMTNVGKGLKAQLAEHFTLDRPEVVTEQVSRDGTRKWLLRMAPTGAHDHNRGAEIECVYIPGDDRGTLCVSSQVGCTLTCSFCHTGTQRLVRNLSTAEIVSQLVVARDALGDFTGQMPGKDGGEVGRLVTNIVFMGMGEPLYNLDAVIDAIAVMSDQEGLALSRRRITVSTSGVVPQIERLGLEANAMLAISLHAVRDELRDELVPLNRKYPIAQLLEACRNYPGLSNARRITFEYVMLKGVNDSDADARALVRLLKGIPAKINLIPFNPWPGSKYECSDWERIERFSEFVFNAGYASPVRTPRGRDILAACGQLKSETEKLRARARMMLEEGMGAEAVYADQVD.

Residue E136 is the Proton acceptor of the active site. The 248-residue stretch at G142–L389 folds into the Radical SAM core domain. The cysteines at positions 149 and 392 are disulfide-linked. 3 residues coordinate [4Fe-4S] cluster: C156, C160, and C163. S-adenosyl-L-methionine is bound by residues G218–E219, S250, S272–H274, and N349. C392 (S-methylcysteine intermediate) is an active-site residue.

It belongs to the radical SAM superfamily. RlmN family. [4Fe-4S] cluster serves as cofactor.

It localises to the cytoplasm. The catalysed reaction is adenosine(2503) in 23S rRNA + 2 reduced [2Fe-2S]-[ferredoxin] + 2 S-adenosyl-L-methionine = 2-methyladenosine(2503) in 23S rRNA + 5'-deoxyadenosine + L-methionine + 2 oxidized [2Fe-2S]-[ferredoxin] + S-adenosyl-L-homocysteine. The enzyme catalyses adenosine(37) in tRNA + 2 reduced [2Fe-2S]-[ferredoxin] + 2 S-adenosyl-L-methionine = 2-methyladenosine(37) in tRNA + 5'-deoxyadenosine + L-methionine + 2 oxidized [2Fe-2S]-[ferredoxin] + S-adenosyl-L-homocysteine. Specifically methylates position 2 of adenine 2503 in 23S rRNA and position 2 of adenine 37 in tRNAs. m2A2503 modification seems to play a crucial role in the proofreading step occurring at the peptidyl transferase center and thus would serve to optimize ribosomal fidelity. The protein is Dual-specificity RNA methyltransferase RlmN of Methylorubrum populi (strain ATCC BAA-705 / NCIMB 13946 / BJ001) (Methylobacterium populi).